Here is a 430-residue protein sequence, read N- to C-terminus: UPF0597 protein Clos_2050 (430 aa).

It belongs to the UPF0597 family.

The protein is UPF0597 protein Clos_2050 of Alkaliphilus oremlandii (strain OhILAs) (Clostridium oremlandii (strain OhILAs)).